A 399-amino-acid polypeptide reads, in one-letter code: Formate-dependent phosphoribosylglycinamide formyltransferase (399 aa).

N(1)-(5-phospho-beta-D-ribosyl)glycinamide contacts are provided by residues 22–23 and glutamate 82; that span reads EL. ATP contacts are provided by residues arginine 114, lysine 155, 160–165, 195–198, and glutamate 203; these read SSGKGQ and EKMI. The region spanning 119–308 is the ATP-grasp domain; sequence RLAAETLHLL…EFALHVRAFL (190 aa). 2 residues coordinate Mg(2+): glutamate 267 and glutamate 279. N(1)-(5-phospho-beta-D-ribosyl)glycinamide contacts are provided by residues aspartate 286, lysine 355, and 362 to 363; that span reads RR.

This sequence belongs to the PurK/PurT family. As to quaternary structure, homodimer.

The catalysed reaction is N(1)-(5-phospho-beta-D-ribosyl)glycinamide + formate + ATP = N(2)-formyl-N(1)-(5-phospho-beta-D-ribosyl)glycinamide + ADP + phosphate + H(+). It participates in purine metabolism; IMP biosynthesis via de novo pathway; N(2)-formyl-N(1)-(5-phospho-D-ribosyl)glycinamide from N(1)-(5-phospho-D-ribosyl)glycinamide (formate route): step 1/1. Its function is as follows. Involved in the de novo purine biosynthesis. Catalyzes the transfer of formate to 5-phospho-ribosyl-glycinamide (GAR), producing 5-phospho-ribosyl-N-formylglycinamide (FGAR). Formate is provided by PurU via hydrolysis of 10-formyl-tetrahydrofolate. This chain is Formate-dependent phosphoribosylglycinamide formyltransferase, found in Proteus mirabilis (strain HI4320).